The following is a 248-amino-acid chain: 5'-nucleotidase SurE (248 aa).

A divalent metal cation-binding residues include D8, D9, S39, and N91.

The protein belongs to the SurE nucleotidase family. The cofactor is a divalent metal cation.

It localises to the cytoplasm. It catalyses the reaction a ribonucleoside 5'-phosphate + H2O = a ribonucleoside + phosphate. Nucleotidase that shows phosphatase activity on nucleoside 5'-monophosphates. The chain is 5'-nucleotidase SurE from Marinomonas sp. (strain MWYL1).